The chain runs to 873 residues: Alanine--tRNA ligase (873 aa).

Residues histidine 563, histidine 567, cysteine 664, and histidine 668 each coordinate Zn(2+).

This sequence belongs to the class-II aminoacyl-tRNA synthetase family. Zn(2+) serves as cofactor.

Its subcellular location is the cytoplasm. It carries out the reaction tRNA(Ala) + L-alanine + ATP = L-alanyl-tRNA(Ala) + AMP + diphosphate. Its function is as follows. Catalyzes the attachment of alanine to tRNA(Ala) in a two-step reaction: alanine is first activated by ATP to form Ala-AMP and then transferred to the acceptor end of tRNA(Ala). Also edits incorrectly charged Ser-tRNA(Ala) and Gly-tRNA(Ala) via its editing domain. This is Alanine--tRNA ligase from Aromatoleum aromaticum (strain DSM 19018 / LMG 30748 / EbN1) (Azoarcus sp. (strain EbN1)).